Here is a 202-residue protein sequence, read N- to C-terminus: Flagellar transcriptional regulator FlhC (202 aa).

Cys-137, Cys-140, Cys-157, and Cys-160 together coordinate Zn(2+).

This sequence belongs to the FlhC family. As to quaternary structure, heterohexamer composed of two FlhC and four FlhD subunits. Each FlhC binds a FlhD dimer, forming a heterotrimer, and a hexamer assembles by dimerization of two heterotrimers. Requires Zn(2+) as cofactor.

The protein localises to the cytoplasm. Functions in complex with FlhD as a master transcriptional regulator that regulates transcription of several flagellar and non-flagellar operons by binding to their promoter region. Activates expression of class 2 flagellar genes, including fliA, which is a flagellum-specific sigma factor that turns on the class 3 genes. Also regulates genes whose products function in a variety of physiological pathways. This Variovorax paradoxus (strain S110) protein is Flagellar transcriptional regulator FlhC.